Here is a 1513-residue protein sequence, read N- to C-terminus: Exo-beta-1,6-galactobiohydrolase (1513 aa).

Residues 1-31 form the signal peptide; that stretch reads MRVLSKSLAAMVAAATLVGGGAFAVAGTAYA. The region spanning 666–801 is the Ricin B-type lectin domain; that stretch reads VADTTSGDSA…PSANQTWTLR (136 aa). F5/8 type C domains lie at 965 to 1112 and 1116 to 1273; these read AIYV…AFVT and GAAK…VFAQ. The segment at 1456–1480 is disordered; sequence VAPGPEEQKPGNTNKPGATGNGNKN. The segment covering 1465 to 1480 has biased composition (polar residues); sequence PGNTNKPGATGNGNKN. Residues 1489–1509 form a helical membrane-spanning segment; sequence VAAIAGAVALLAAAAGALFML.

It belongs to the glycosyl hydrolase 30 family.

It localises to the cell membrane. It catalyses the reaction Hydrolysis of (1-&gt;6)-beta-D-galactosidic linkages in arabinogalactan proteins and (1-&gt;3):(1-&gt;6)-beta-galactans to yield (1-&gt;6)-beta-galactobiose as the final product.. Its function is as follows. Involved in the type II arabinogalactan (AG) side chains degradation. Specifically releases the non-reducing terminal beta-1,6-galactobiose (beta-1,6-Gal2) from both dearabinosylated larch AG and polymeric beta-1,6-galactan chains by an exo-mode of action. Shows lower activity with larch AG, and very weak activity with dearabinosylated gum arabic, gum arabic and potato galactan. Can probably release beta-1,6-Gal2 from the internal side chains of type II AG. This is Exo-beta-1,6-galactobiohydrolase from Bifidobacterium longum subsp. longum (strain ATCC 15707 / DSM 20219 / JCM 1217 / NCTC 11818 / E194b).